Consider the following 350-residue polypeptide: Nicotinate-nucleotide--dimethylbenzimidazole phosphoribosyltransferase (350 aa).

The active-site Proton acceptor is the E317.

This sequence belongs to the CobT family.

It catalyses the reaction 5,6-dimethylbenzimidazole + nicotinate beta-D-ribonucleotide = alpha-ribazole 5'-phosphate + nicotinate + H(+). Its pathway is nucleoside biosynthesis; alpha-ribazole biosynthesis; alpha-ribazole from 5,6-dimethylbenzimidazole: step 1/2. In terms of biological role, catalyzes the synthesis of alpha-ribazole-5'-phosphate from nicotinate mononucleotide (NAMN) and 5,6-dimethylbenzimidazole (DMB). This is Nicotinate-nucleotide--dimethylbenzimidazole phosphoribosyltransferase from Shewanella putrefaciens (strain CN-32 / ATCC BAA-453).